A 344-amino-acid chain; its full sequence is Dihydroorotate dehydrogenase (quinone) (344 aa).

FMN is bound by residues A61–K65 and T85. Residue K65 coordinates substrate. N110–F114 is a substrate binding site. N138 and N171 together coordinate FMN. N171 contacts substrate. Catalysis depends on S174, which acts as the Nucleophile. N176 contributes to the substrate binding site. Residues K216 and T244 each coordinate FMN. Position 245-246 (N245–T246) interacts with substrate. FMN is bound by residues G267, G296, and Y317–S318.

The protein belongs to the dihydroorotate dehydrogenase family. Type 2 subfamily. As to quaternary structure, monomer. The cofactor is FMN.

It is found in the cell membrane. The catalysed reaction is (S)-dihydroorotate + a quinone = orotate + a quinol. Its pathway is pyrimidine metabolism; UMP biosynthesis via de novo pathway; orotate from (S)-dihydroorotate (quinone route): step 1/1. Catalyzes the conversion of dihydroorotate to orotate with quinone as electron acceptor. The chain is Dihydroorotate dehydrogenase (quinone) from Psychrobacter arcticus (strain DSM 17307 / VKM B-2377 / 273-4).